Consider the following 430-residue polypeptide: Enolase (430 aa).

Gln167 provides a ligand contact to (2R)-2-phosphoglycerate. Glu209 functions as the Proton donor in the catalytic mechanism. 3 residues coordinate Mg(2+): Asp246, Glu289, and Asp316. (2R)-2-phosphoglycerate-binding residues include Lys341, Arg370, Ser371, and Lys392. Lys341 serves as the catalytic Proton acceptor.

It belongs to the enolase family. In terms of assembly, component of the RNA degradosome, a multiprotein complex involved in RNA processing and mRNA degradation. Mg(2+) serves as cofactor.

Its subcellular location is the cytoplasm. The protein resides in the secreted. The protein localises to the cell surface. The enzyme catalyses (2R)-2-phosphoglycerate = phosphoenolpyruvate + H2O. The protein operates within carbohydrate degradation; glycolysis; pyruvate from D-glyceraldehyde 3-phosphate: step 4/5. In terms of biological role, catalyzes the reversible conversion of 2-phosphoglycerate (2-PG) into phosphoenolpyruvate (PEP). It is essential for the degradation of carbohydrates via glycolysis. The polypeptide is Enolase (Alteromonas mediterranea (strain DSM 17117 / CIP 110805 / LMG 28347 / Deep ecotype)).